Consider the following 323-residue polypeptide: Putative HTH-type transcriptional regulatory protein Mbur_1811 (323 aa).

An HTH cro/C1-type domain is found at 132 to 190 (LKEARMNVSMSLGALASELGVSRRTISKYEEGQMDASIDIVLHLEEILDMALAKSIDIL). The H-T-H motif DNA-binding region spans 143–162 (LGALASELGVSRRTISKYEE).

The protein is Putative HTH-type transcriptional regulatory protein Mbur_1811 of Methanococcoides burtonii (strain DSM 6242 / NBRC 107633 / OCM 468 / ACE-M).